We begin with the raw amino-acid sequence, 294 residues long: Tyrosine recombinase XerC (294 aa).

Residues 1 to 85 (MSRLVEDFFA…ACRGFYTWLV (85 aa)) enclose the Core-binding (CB) domain. Positions 106 to 283 (KLPRILDADE…DFQYLSKVYD (178 aa)) constitute a Tyr recombinase domain. Active-site residues include Arg-145, Lys-169, His-235, Arg-238, and His-261. The O-(3'-phospho-DNA)-tyrosine intermediate role is filled by Tyr-270.

The protein belongs to the 'phage' integrase family. XerC subfamily. As to quaternary structure, forms a cyclic heterotetrameric complex composed of two molecules of XerC and two molecules of XerD.

Its subcellular location is the cytoplasm. Site-specific tyrosine recombinase, which acts by catalyzing the cutting and rejoining of the recombining DNA molecules. The XerC-XerD complex is essential to convert dimers of the bacterial chromosome into monomers to permit their segregation at cell division. It also contributes to the segregational stability of plasmids. In Xylella fastidiosa (strain M23), this protein is Tyrosine recombinase XerC.